The primary structure comprises 359 residues: Dual-specificity RNA methyltransferase RlmN (359 aa).

Glu-102 (proton acceptor) is an active-site residue. The 244-residue stretch at 108–351 folds into the Radical SAM core domain; the sequence is EKKRATLCIS…IRKNRGSDIQ (244 aa). Cys-115 and Cys-354 form a disulfide bridge. The [4Fe-4S] cluster site is built by Cys-122, Cys-126, and Cys-129. Residues 178 to 179, Ser-210, 232 to 234, and Asn-311 contribute to the S-adenosyl-L-methionine site; these read GE and SLH. Cys-354 (S-methylcysteine intermediate) is an active-site residue.

This sequence belongs to the radical SAM superfamily. RlmN family. [4Fe-4S] cluster is required as a cofactor.

Its subcellular location is the cytoplasm. The enzyme catalyses adenosine(2503) in 23S rRNA + 2 reduced [2Fe-2S]-[ferredoxin] + 2 S-adenosyl-L-methionine = 2-methyladenosine(2503) in 23S rRNA + 5'-deoxyadenosine + L-methionine + 2 oxidized [2Fe-2S]-[ferredoxin] + S-adenosyl-L-homocysteine. The catalysed reaction is adenosine(37) in tRNA + 2 reduced [2Fe-2S]-[ferredoxin] + 2 S-adenosyl-L-methionine = 2-methyladenosine(37) in tRNA + 5'-deoxyadenosine + L-methionine + 2 oxidized [2Fe-2S]-[ferredoxin] + S-adenosyl-L-homocysteine. Its function is as follows. Specifically methylates position 2 of adenine 2503 in 23S rRNA and position 2 of adenine 37 in tRNAs. m2A2503 modification seems to play a crucial role in the proofreading step occurring at the peptidyl transferase center and thus would serve to optimize ribosomal fidelity. This Buchnera aphidicola subsp. Cinara cedri (strain Cc) protein is Dual-specificity RNA methyltransferase RlmN.